A 339-amino-acid polypeptide reads, in one-letter code: Dihydroorotate dehydrogenase (quinone) (339 aa).

FMN is bound by residues 62–66 (AGLDK) and Thr-86. Lys-66 contributes to the substrate binding site. 111-115 (NRMGF) contributes to the substrate binding site. The FMN site is built by Asn-139 and Asn-172. Residue Asn-172 participates in substrate binding. Ser-175 acts as the Nucleophile in catalysis. Position 177 (Asn-177) interacts with substrate. FMN-binding residues include Lys-217 and Thr-245. Residue 246-247 (NT) coordinates substrate. Residues Gly-268, Gly-297, and 318-319 (YS) each bind FMN.

This sequence belongs to the dihydroorotate dehydrogenase family. Type 2 subfamily. In terms of assembly, monomer. It depends on FMN as a cofactor.

It is found in the cell membrane. The enzyme catalyses (S)-dihydroorotate + a quinone = orotate + a quinol. The protein operates within pyrimidine metabolism; UMP biosynthesis via de novo pathway; orotate from (S)-dihydroorotate (quinone route): step 1/1. Functionally, catalyzes the conversion of dihydroorotate to orotate with quinone as electron acceptor. In Shewanella amazonensis (strain ATCC BAA-1098 / SB2B), this protein is Dihydroorotate dehydrogenase (quinone).